A 226-amino-acid polypeptide reads, in one-letter code: MRMSKLYKNKEKENEKPSNEPPIKQDSLKRMSSKFLGNSLNSFDLSGKLEQVDEYLKKYPFIIEFGYKLGIKPSYIVVFGGSALFISLVLGWGAALICNLVGFAYPAYQSFKAVESQGHAETKLWLTYWVVFSLFFFIEYLIDIILFWIPFYYVIKLLFLLYLYMPQVRGAETVYNYIIRPILLKHEKTIDDTVHKISQTATNHLNQFTGNIAEKLVQEGVRRRNV.

The interval 1–25 is disordered; it reads MRMSKLYKNKEKENEKPSNEPPIKQ. Residues 1–72 lie on the Cytoplasmic side of the membrane; the sequence is MRMSKLYKNK…IEFGYKLGIK (72 aa). Basic and acidic residues predominate over residues 8-18; the sequence is KNKEKENEKPS. A helical transmembrane segment spans residues 73–92; that stretch reads PSYIVVFGGSALFISLVLGW. The Lumenal segment spans residues 93-94; that stretch reads GA. A helical transmembrane segment spans residues 95-113; sequence ALICNLVGFAYPAYQSFKA. The Cytoplasmic segment spans residues 114–123; that stretch reads VESQGHAETK. The helical transmembrane segment at 124-140 threads the bilayer; that stretch reads LWLTYWVVFSLFFFIEY. The Lumenal portion of the chain corresponds to 141 to 143; that stretch reads LID. Residues 144–162 traverse the membrane as a helical segment; that stretch reads IILFWIPFYYVIKLLFLLY. At 163–226 the chain is on the cytoplasmic side; it reads LYMPQVRGAE…VQEGVRRRNV (64 aa).

The protein belongs to the DP1 family. May form oligomers.

The protein resides in the endoplasmic reticulum membrane. In terms of biological role, required to generate and maintain the structure of the tubular endoplasmic reticulum network and the digestive (food) vacuole. Induces high curvature in membranes and causes membrane tubule formation. This Plasmodium berghei (strain Anka) protein is Protein YOP1 homolog.